Here is a 340-residue protein sequence, read N- to C-terminus: Ketol-acid reductoisomerase (NADP(+)) (340 aa).

The region spanning 3–183 (VSIYYDKDCD…GGGRTGIIET (181 aa)) is the KARI N-terminal Rossmann domain. NADP(+) is bound by residues 26 to 29 (FGSQ), lysine 49, serine 54, and 84 to 87 (DEIQ). The active site involves histidine 109. Glycine 135 is a binding site for NADP(+). The region spanning 184 to 329 (TFKAETETDL…RELRAMMPWI (146 aa)) is the KARI C-terminal knotted domain. Mg(2+) contacts are provided by aspartate 192, glutamate 196, glutamate 228, and glutamate 232. A substrate-binding site is contributed by serine 253.

The protein belongs to the ketol-acid reductoisomerase family. It depends on Mg(2+) as a cofactor.

The enzyme catalyses (2R)-2,3-dihydroxy-3-methylbutanoate + NADP(+) = (2S)-2-acetolactate + NADPH + H(+). It carries out the reaction (2R,3R)-2,3-dihydroxy-3-methylpentanoate + NADP(+) = (S)-2-ethyl-2-hydroxy-3-oxobutanoate + NADPH + H(+). The protein operates within amino-acid biosynthesis; L-isoleucine biosynthesis; L-isoleucine from 2-oxobutanoate: step 2/4. It functions in the pathway amino-acid biosynthesis; L-valine biosynthesis; L-valine from pyruvate: step 2/4. In terms of biological role, involved in the biosynthesis of branched-chain amino acids (BCAA). Catalyzes an alkyl-migration followed by a ketol-acid reduction of (S)-2-acetolactate (S2AL) to yield (R)-2,3-dihydroxy-isovalerate. In the isomerase reaction, S2AL is rearranged via a Mg-dependent methyl migration to produce 3-hydroxy-3-methyl-2-ketobutyrate (HMKB). In the reductase reaction, this 2-ketoacid undergoes a metal-dependent reduction by NADPH to yield (R)-2,3-dihydroxy-isovalerate. In Campylobacter lari (strain RM2100 / D67 / ATCC BAA-1060), this protein is Ketol-acid reductoisomerase (NADP(+)).